A 117-amino-acid chain; its full sequence is Ig heavy chain V-A2 region K-25 (117 aa).

Residue glutamine 1 is modified to Pyrrolidone carboxylic acid. Residues 1 to 106 (QSVKESEGGL…GLSYLKSSVD (106 aa)) form the Ig-like domain. A disulfide bond links cysteine 21 and cysteine 91.

This chain is Ig heavy chain V-A2 region K-25, found in Oryctolagus cuniculus (Rabbit).